The sequence spans 170 residues: uncharacterized protein (170 aa).

The N-acetyltransferase domain occupies Leu-8–Glu-167.

It belongs to the acetyltransferase family.

This is an uncharacterized protein from Bacillus subtilis (strain 168).